We begin with the raw amino-acid sequence, 1462 residues long: MGAQDRPQCHFDIEINREPVGRIMFQLFSDICPKTCKNFLCLCSGEKGLGKTTGKKLCYKGSTFHRVVKNFMIQGGDFSEGNGKGGESIYGGYFKDENFILKHDRAFLLSMANRGKHTNGSQFFITTKPAPHLDGVHVVFGLVISGFEVIEQIENLKTDAASRPYADVRVIDCGVLATKSIKDVFEKKRKKPTHSEGSDSSSNSSSSSESSSESELEHERSRRRKHKRRPKVKRSKKRRKEASSSEEPRNKHAMNPKGHSERSDTNEKRSVDSSAKREKPVVRPEEIPPVPENRFLLRRDMPVVTAEPEPKIPDVAPIVSDQKPSVSKSGRKIKGRGTIRYHTPPRSRSCSESDDDDSSETPPHWKEEMQRLRAYRPPSGEKWSKGDKLSDPCSSRWDERSLSQRSRSWSYNGYYSDLSTARHSGHHKKRRKEKKVKHKKKGKKQKHCRRHKQTKKRRILIPSDIESSKSSTRRMKSSCDRERSSRSSSLSSHHSSKRDWSKSDKDVQSSLTHSSRDSYRSKSHSQSYSRGSSRSRTASKSSSHSRSRSKSRSSSKSGHRKRASKSPRKTASQLSENKPVKTEPLRATMAQNENVVVQPVVAENIPVIPLSDSPPPSRWKPGQKPWKPSYERIQEMKAKTTHLLPIQSTYSLANIKETGSSSSYHKREKNSESDQSTYSKYSDRSSESSPRSRSRSSRSRSYSRSYTRSRSLASSHSRSRSPSSRSHSRNKYSDHSQCSRSSSYTSISSDDGRRAKRRLRSSGKKNSVSHKKHSSSSEKTLHSKYVKGRDRSSCVRKYSESRSSLDYSSDSEQSSVQATQSAQEKEKQGQMERTHNKQEKNRGEEKSKSERECPHSKKRTLKENLSDHLRNGSKPKRKNYAGSKWDSESNSERDVTKNSKNDSHPSSDKEEGEATSDSESEVSEIHIKVKPTTKSSTNTSLPDDNGAWKSSKQRTSTSDSEGSCSNSENNRGKPQKHKHGSKENLKREHTKKVKEKLKGKKDKKHKAPKRKQAFHWQPPLEFGEEEEEEIDDKQVTQESKEKKVSENNETIKDNILKTEKSSEEDLSGKHDTVTVSSDLDQFTKDDSKLSISPTALNTEENVACLQNIQHVEESVPNGVEDVLQTDDNMEICTPDRSSPAKVEETSPLGNARLDTPDINIVLKQDMATEHPQAEVVKQESSMSESKVLGEVGKQDSSSASLASAGESTGKKEVAEKSQINLIDKKWKPLQGVGNLAAPNAATSSAVEVKVLTTVPEMKPQGLRIEIKSKNKVRPGSLFDEVRKTARLNRRPRNQESSSDEQTPSRDDDSQSRSPSRSRSKSETKSRHRTRSVSYSHSRSRSRSSTSSYRSRSYSRSRSRGWYSRGRTRSRSSSYRSYKSHRTSSRSRSRSSSYDPHSRSRSYTYDSYYSRSRSRSRSQRSDSYHRGRSYNRRSRSCRSYGSDSESDRSYSHHRSPSESSRYS.

Residues 10-175 form the PPIase cyclophilin-type domain; it reads HFDIEINREP…ADVRVIDCGV (166 aa). Disordered stretches follow at residues 187–591 and 607–627; these read KKRK…TMAQ and VIPL…KPWK. Residues 198–213 show a composition bias toward low complexity; sequence SDSSSNSSSSSESSSE. Residues 221-240 are compositionally biased toward basic residues; sequence SRRRKHKRRPKVKRSKKRRK. Composition is skewed to basic and acidic residues over residues 241–250 and 258–286; these read EASSSEEPRN and GHSE…RPEE. K323 participates in a covalent cross-link: Glycyl lysine isopeptide (Lys-Gly) (interchain with G-Cter in SUMO2). A compositionally biased stretch (basic residues) spans 329–345; that stretch reads SGRKIKGRGTIRYHTPP. A phosphoserine mark is found at S379, S401, and S416. Residues 382–402 are compositionally biased toward basic and acidic residues; the sequence is KWSKGDKLSDPCSSRWDERSL. Residues 403 to 421 show a composition bias toward polar residues; it reads SQRSRSWSYNGYYSDLSTA. The segment covering 423–459 has biased composition (basic residues); sequence HSGHHKKRRKEKKVKHKKKGKKQKHCRRHKQTKKRRI. S463 and S471 each carry phosphoserine. The span at 497–507 shows a compositional bias: basic and acidic residues; the sequence is KRDWSKSDKDV. Residues 524 to 542 are compositionally biased toward low complexity; that stretch reads HSQSYSRGSSRSRTASKSS. Basic residues predominate over residues 543-568; sequence SHSRSRSKSRSSSKSGHRKRASKSPR. Glycyl lysine isopeptide (Lys-Gly) (interchain with G-Cter in SUMO2) cross-links involve residues K578 and K581. Phosphoserine is present on S613. K639 participates in a covalent cross-link: Glycyl lysine isopeptide (Lys-Gly) (interchain with G-Cter in SUMO2). The residue at position 648 (S648) is a Phosphoserine. Residues K656 and K666 each participate in a glycyl lysine isopeptide (Lys-Gly) (interchain with G-Cter in SUMO2) cross-link. The disordered stretch occupies residues 658 to 1072; that stretch reads TGSSSSYHKR…EEDLSGKHDT (415 aa). 2 stretches are compositionally biased toward low complexity: residues 699 to 725 and 736 to 749; these read SRSY…PSSR and SQCS…SISS. A compositionally biased stretch (basic residues) spans 754–774; the sequence is RAKRRLRSSGKKNSVSHKKHS. Over residues 775–800 the composition is skewed to basic and acidic residues; sequence SSSEKTLHSKYVKGRDRSSCVRKYSE. Positions 801-815 are enriched in low complexity; the sequence is SRSSLDYSSDSEQSS. Composition is skewed to basic and acidic residues over residues 823-870 and 885-909; these read QEKE…DHLR and WDSE…SSDK. S866, S887, S889, S891, and S907 each carry phosphoserine. The segment covering 910–922 has biased composition (acidic residues); it reads EEGEATSDSESEV. A compositionally biased stretch (polar residues) spans 932–969; sequence TTKSSTNTSLPDDNGAWKSSKQRTSTSDSEGSCSNSEN. The segment covering 988 to 1013 has biased composition (basic residues); sequence EHTKKVKEKLKGKKDKKHKAPKRKQA. Residues 1022–1031 are compositionally biased toward acidic residues; it reads FGEEEEEEID. Basic and acidic residues predominate over residues 1032 to 1072; that stretch reads DKQVTQESKEKKVSENNETIKDNILKTEKSSEEDLSGKHDT. Residue K1057 forms a Glycyl lysine isopeptide (Lys-Gly) (interchain with G-Cter in SUMO2) linkage. 2 positions are modified to phosphoserine: S1077 and S1146. Positions 1129-1156 are disordered; sequence MEICTPDRSSPAKVEETSPLGNARLDTP. T1155 is modified (phosphothreonine). Residue K1163 forms a Glycyl lysine isopeptide (Lys-Gly) (interchain with G-Cter in SUMO2) linkage. A disordered region spans residues 1169-1215; it reads EHPQAEVVKQESSMSESKVLGEVGKQDSSSASLASAGESTGKKEVAE. Residue K1177 forms a Glycyl lysine isopeptide (Lys-Gly) (interchain with G-Cter in SUMO1); alternate linkage. A Glycyl lysine isopeptide (Lys-Gly) (interchain with G-Cter in SUMO2); alternate cross-link involves residue K1177. Phosphoserine is present on S1203. Glycyl lysine isopeptide (Lys-Gly) (interchain with G-Cter in SUMO2) cross-links involve residues K1216, K1225, and K1258. The interval 1251–1462 is disordered; that stretch reads LTTVPEMKPQ…RSPSESSRYS (212 aa). The interval 1311-1348 is arg/Ser tandem repeat-rich; sequence SRSPSRSRSKSETKSRHRTRSVSYSHSRSRSRSSTSSY. Low complexity-rich tracts occupy residues 1331–1351 and 1359–1376; these read SVSY…YRSR and RGWY…SYRS. Basic residues predominate over residues 1377 to 1388; it reads YKSHRTSSRSRS. The span at 1389 to 1410 shows a compositional bias: low complexity; that stretch reads RSSSYDPHSRSRSYTYDSYYSR. The segment covering 1425-1435 has biased composition (basic residues); that stretch reads RGRSYNRRSRS.

The protein localises to the cell membrane. It catalyses the reaction [protein]-peptidylproline (omega=180) = [protein]-peptidylproline (omega=0). Its activity is regulated as follows. Inhibited by cyclosporin A (CsA). PPIase that catalyzes the cis-trans isomerization of proline imidic peptide bonds in oligopeptides and may therefore assist protein folding. Component of a putative tumor-recognition complex involved in the function of NK cells. This chain is NK-tumor recognition protein, found in Homo sapiens (Human).